Reading from the N-terminus, the 227-residue chain is Cytochrome c oxidase subunit 2 (227 aa).

The Mitochondrial intermembrane portion of the chain corresponds to 1–14 (MAHAAQVGLQDATS). Residues 15–45 (PIMEELVIFHDHALMIIFLICFLVLYALFLT) traverse the membrane as a helical segment. Residues 46–59 (LTTKLTNTSISDAQ) are Mitochondrial matrix-facing. A helical membrane pass occupies residues 60 to 87 (EMETIWTILPAIILILIALPSLRILYLT). The Mitochondrial intermembrane portion of the chain corresponds to 88-227 (DEINDPSFTI…IFEMGPVFTL (140 aa)). Positions 161, 196, 198, 200, 204, and 207 each coordinate Cu cation. Residue E198 participates in Mg(2+) binding.

Belongs to the cytochrome c oxidase subunit 2 family. In terms of assembly, component of the cytochrome c oxidase (complex IV, CIV), a multisubunit enzyme composed of 14 subunits. The complex is composed of a catalytic core of 3 subunits MT-CO1, MT-CO2 and MT-CO3, encoded in the mitochondrial DNA, and 11 supernumerary subunits COX4I, COX5A, COX5B, COX6A, COX6B, COX6C, COX7A, COX7B, COX7C, COX8 and NDUFA4, which are encoded in the nuclear genome. The complex exists as a monomer or a dimer and forms supercomplexes (SCs) in the inner mitochondrial membrane with NADH-ubiquinone oxidoreductase (complex I, CI) and ubiquinol-cytochrome c oxidoreductase (cytochrome b-c1 complex, complex III, CIII), resulting in different assemblies (supercomplex SCI(1)III(2)IV(1) and megacomplex MCI(2)III(2)IV(2)). Found in a complex with TMEM177, COA6, COX18, COX20, SCO1 and SCO2. Interacts with TMEM177 in a COX20-dependent manner. Interacts with COX20. Interacts with COX16. Cu cation serves as cofactor.

It is found in the mitochondrion inner membrane. The enzyme catalyses 4 Fe(II)-[cytochrome c] + O2 + 8 H(+)(in) = 4 Fe(III)-[cytochrome c] + 2 H2O + 4 H(+)(out). Its function is as follows. Component of the cytochrome c oxidase, the last enzyme in the mitochondrial electron transport chain which drives oxidative phosphorylation. The respiratory chain contains 3 multisubunit complexes succinate dehydrogenase (complex II, CII), ubiquinol-cytochrome c oxidoreductase (cytochrome b-c1 complex, complex III, CIII) and cytochrome c oxidase (complex IV, CIV), that cooperate to transfer electrons derived from NADH and succinate to molecular oxygen, creating an electrochemical gradient over the inner membrane that drives transmembrane transport and the ATP synthase. Cytochrome c oxidase is the component of the respiratory chain that catalyzes the reduction of oxygen to water. Electrons originating from reduced cytochrome c in the intermembrane space (IMS) are transferred via the dinuclear copper A center (CU(A)) of subunit 2 and heme A of subunit 1 to the active site in subunit 1, a binuclear center (BNC) formed by heme A3 and copper B (CU(B)). The BNC reduces molecular oxygen to 2 water molecules using 4 electrons from cytochrome c in the IMS and 4 protons from the mitochondrial matrix. The protein is Cytochrome c oxidase subunit 2 (MT-CO2) of Pongo abelii (Sumatran orangutan).